The sequence spans 1003 residues: Phosphoenolpyruvate carboxylase (1003 aa).

The tract at residues 1–24 is disordered; it reads MIMTVSDPGGSSMSSSSAITPESE. Catalysis depends on residues His-190 and Lys-646.

The protein belongs to the PEPCase type 1 family. Mg(2+) serves as cofactor.

The enzyme catalyses oxaloacetate + phosphate = phosphoenolpyruvate + hydrogencarbonate. Forms oxaloacetate, a four-carbon dicarboxylic acid source for the tricarboxylic acid cycle. The chain is Phosphoenolpyruvate carboxylase from Synechococcus sp. (strain WH7803).